A 71-amino-acid chain; its full sequence is Peptide Ctri9819 (71 aa).

Residues 1 to 23 (MKTVSTVAILAIFLLIVITTIET) form the signal peptide. Leu34 bears the Leucine amide mark. A propeptide spanning residues 38–71 (SKLETFKRIARTLSAGISAKRSLEDVNSLTGMSS) is cleaved from the precursor.

It belongs to the non-disulfide-bridged peptide (NDBP) superfamily. Short antimicrobial peptide (group 4) family. In terms of tissue distribution, expressed by the venom gland.

It localises to the secreted. Antimicrobial peptide. The protein is Peptide Ctri9819 of Chaerilus tricostatus (Scorpion).